A 210-amino-acid polypeptide reads, in one-letter code: Signal peptidase complex catalytic subunit SEC11 (210 aa).

Residues 1–14 (MLSSLSPHLSNVRQ) lie on the Cytoplasmic side of the membrane. A helical; Signal-anchor for type II membrane protein membrane pass occupies residues 15 to 31 (TLTQVLNFALVLSTAFM). Topologically, residues 32–210 (MWKALSIYTN…MGVMVILQRE (179 aa)) are lumenal. A glycan (N-linked (GlcNAc...) asparagine) is linked at asparagine 41. Active-site charge relay system residues include serine 53 and histidine 92. Residues 101-110 (DARDPKEGGG) are compositionally biased toward basic and acidic residues. Residues 101–124 (DARDPKEGGGKKGKSASGTGKKES) form a disordered region. Aspartate 152 serves as the catalytic Charge relay system. A C-terminal short (CTS) helix region spans residues 196 to 207 (VLLGLMGVMVIL).

It belongs to the peptidase S26B family. Component of the signal peptidase complex (SPC) composed of a catalytic subunit SEC11 and three accessory subunits SPC1, SPC2 and SPC3. The complex induces a local thinning of the ER membrane which is used to measure the length of the signal peptide (SP) h-region of protein substrates. This ensures the selectivity of the complex towards h-regions shorter than 18-20 amino acids. SPC associates with the translocon complex.

The protein localises to the endoplasmic reticulum membrane. It carries out the reaction Cleavage of hydrophobic, N-terminal signal or leader sequences from secreted and periplasmic proteins.. Functionally, catalytic component of the signal peptidase complex (SPC) which catalyzes the cleavage of N-terminal signal sequences from nascent proteins as they are translocated into the lumen of the endoplasmic reticulum. Specifically cleaves N-terminal signal peptides that contain a hydrophobic alpha-helix (h-region) shorter than 18-20 amino acids. The sequence is that of Signal peptidase complex catalytic subunit SEC11 (SEC11) from Uncinocarpus reesii (strain UAMH 1704).